Reading from the N-terminus, the 270-residue chain is Glucosamine-6-phosphate deaminase (270 aa).

The active-site Proton acceptor; for enolization step is D72. D141 functions as the For ring-opening step in the catalytic mechanism. H143 (proton acceptor; for ring-opening step) is an active-site residue. The active-site For ring-opening step is E148.

Belongs to the glucosamine/galactosamine-6-phosphate isomerase family. NagB subfamily. Homohexamer.

The enzyme catalyses alpha-D-glucosamine 6-phosphate + H2O = beta-D-fructose 6-phosphate + NH4(+). It functions in the pathway amino-sugar metabolism; N-acetylneuraminate degradation; D-fructose 6-phosphate from N-acetylneuraminate: step 5/5. With respect to regulation, allosterically activated by N-acetylglucosamine 6-phosphate (GlcNAc6P). Functionally, catalyzes the reversible isomerization-deamination of glucosamine 6-phosphate (GlcN6P) to form fructose 6-phosphate (Fru6P) and ammonium ion. The sequence is that of Glucosamine-6-phosphate deaminase from Haemophilus influenzae (strain 86-028NP).